We begin with the raw amino-acid sequence, 307 residues long: MLTVTAPAKVNLHLEVLGLRSDGFHELAMVMQSIDLADSLQFTNTADAQITLRCDDSSLSTGADNLVLKAAELLRARSGFNELGVSMYLEKRIPIGAGLAGGSSDGAAALVGLNALWGLGYTAEALESMAAELGSDMPFCVAGGTQLCFGRGELLEPVPPTAEGLAVLLVKDPLVSVSTPWAYQRCKELKGKNYLEGEVAFEQRRRDLREAPWLQPLRAGCPPPLRNDLQVVVAAETQAVQVSLQLLQTLPTPLAVAMSGSGPSCFALFGDQDQCDQAAADLSPKLKAAGLKAWACSLRSDGVRIAS.

Lys-9 is a catalytic residue. 94–104 lines the ATP pocket; the sequence is PIGAGLAGGSS. Residue Asp-136 is part of the active site.

Belongs to the GHMP kinase family. IspE subfamily.

The catalysed reaction is 4-CDP-2-C-methyl-D-erythritol + ATP = 4-CDP-2-C-methyl-D-erythritol 2-phosphate + ADP + H(+). It functions in the pathway isoprenoid biosynthesis; isopentenyl diphosphate biosynthesis via DXP pathway; isopentenyl diphosphate from 1-deoxy-D-xylulose 5-phosphate: step 3/6. In terms of biological role, catalyzes the phosphorylation of the position 2 hydroxy group of 4-diphosphocytidyl-2C-methyl-D-erythritol. The sequence is that of 4-diphosphocytidyl-2-C-methyl-D-erythritol kinase from Synechococcus sp. (strain CC9902).